The following is a 985-amino-acid chain: Vacuolar membrane protease (985 aa).

At 1-20 (MASSRAQRFNPIAFTPWPVT) the chain is on the cytoplasmic side. Residues 21–41 (CITTIVYLALLIPILVINLVV) traverse the membrane as a helical segment. Residues 42 to 388 (PSAPETNPKG…MFGTAFAVFR (347 aa)) lie on the Vacuolar side of the membrane. N-linked (GlcNAc...) asparagine glycans are attached at residues asparagine 53, asparagine 116, and asparagine 119. Zn(2+) is bound by residues histidine 175 and aspartate 187. Glutamate 221 functions as the Proton acceptor in the catalytic mechanism. Glutamate 222 contacts Zn(2+). A glycan (N-linked (GlcNAc...) asparagine) is linked at asparagine 238. Positions 247 and 320 each coordinate Zn(2+). The chain crosses the membrane as a helical span at residues 389 to 409 (LHTLFAISVALLVIAPLVIFV). The Cytoplasmic portion of the chain corresponds to 410 to 440 (TNRMYLFSMSKSLEGTGDQVSLRGLRGFSRT). The chain crosses the membrane as a helical span at residues 441–461 (PIILVTATTIPICLAYLLEKV). The Vacuolar portion of the chain corresponds to 462-470 (NPYIVHSSQ). The helical transmembrane segment at 471-491 (FSVWSMMFSAWIFLAWFLACA) threads the bilayer. At 492–502 (ADFFRPSALHR) the chain is on the cytoplasmic side. The helical transmembrane segment at 503 to 523 (AYSYTWIFIATWIMLVINTVY) threads the bilayer. The Vacuolar portion of the chain corresponds to 524-527 (ANQK). A helical transmembrane segment spans residues 528 to 548 (GIAAGYFLLFYFAGAFLATWI). The Cytoplasmic segment spans residues 549-666 (SYLELFALPR…TLPRWTWVLQ (118 aa)). The segment at 563-612 (ARQTTGRRPSSLSSRLLTSSADELRSNASPSTAEFPGAAGEDTDPTESTS) is disordered. Positions 566-582 (TTGRRPSSLSSRLLTSS) are enriched in low complexity. A helical membrane pass occupies residues 667 to 687 (LLLLAPIVLILVGQLALFLTA). At 688-700 (SMCQVGSDGVSTF) the chain is on the vacuolar side. Residues 701 to 721 (VVYLACAVFTTLLCIPLFPLI) traverse the membrane as a helical segment. Topologically, residues 722 to 727 (HRFTYH) are cytoplasmic. Residues 728-748 (IPTFLFLVFIGTLIYNLVAFP) form a helical membrane-spanning segment. Residues 749-985 (FSPANRLKTF…VEASHSFTIQ (237 aa)) lie on the Vacuolar side of the membrane. N-linked (GlcNAc...) asparagine glycosylation is found at asparagine 767, asparagine 795, and asparagine 839.

It belongs to the peptidase M28 family. Requires Zn(2+) as cofactor.

It is found in the vacuole membrane. May be involved in vacuolar sorting and osmoregulation. The sequence is that of Vacuolar membrane protease from Ajellomyces capsulatus (strain G186AR / H82 / ATCC MYA-2454 / RMSCC 2432) (Darling's disease fungus).